We begin with the raw amino-acid sequence, 245 residues long: 1-(5-phosphoribosyl)-5-[(5-phosphoribosylamino)methylideneamino] imidazole-4-carboxamide isomerase (245 aa).

D7 acts as the Proton acceptor in catalysis. D129 serves as the catalytic Proton donor.

Belongs to the HisA/HisF family.

The protein localises to the cytoplasm. It catalyses the reaction 1-(5-phospho-beta-D-ribosyl)-5-[(5-phospho-beta-D-ribosylamino)methylideneamino]imidazole-4-carboxamide = 5-[(5-phospho-1-deoxy-D-ribulos-1-ylimino)methylamino]-1-(5-phospho-beta-D-ribosyl)imidazole-4-carboxamide. It participates in amino-acid biosynthesis; L-histidine biosynthesis; L-histidine from 5-phospho-alpha-D-ribose 1-diphosphate: step 4/9. In Escherichia coli O7:K1 (strain IAI39 / ExPEC), this protein is 1-(5-phosphoribosyl)-5-[(5-phosphoribosylamino)methylideneamino] imidazole-4-carboxamide isomerase.